Here is a 307-residue protein sequence, read N- to C-terminus: Coenzyme PQQ synthesis protein B (307 aa).

It belongs to the PqqB family.

Its pathway is cofactor biosynthesis; pyrroloquinoline quinone biosynthesis. In terms of biological role, may be involved in the transport of PQQ or its precursor to the periplasm. The polypeptide is Coenzyme PQQ synthesis protein B (Gluconacetobacter diazotrophicus (strain ATCC 49037 / DSM 5601 / CCUG 37298 / CIP 103539 / LMG 7603 / PAl5)).